Here is a 245-residue protein sequence, read N- to C-terminus: 4-hydroxy-tetrahydrodipicolinate reductase (245 aa).

NAD(+) contacts are provided by residues 7–12 (GAKGKV), 75–77 (GTT), and 102–105 (APNF). H132 functions as the Proton donor/acceptor in the catalytic mechanism. Residue H133 coordinates (S)-2,3,4,5-tetrahydrodipicolinate. K136 (proton donor) is an active-site residue. 142–143 (GT) lines the (S)-2,3,4,5-tetrahydrodipicolinate pocket.

The protein belongs to the DapB family.

It is found in the cytoplasm. The catalysed reaction is (S)-2,3,4,5-tetrahydrodipicolinate + NAD(+) + H2O = (2S,4S)-4-hydroxy-2,3,4,5-tetrahydrodipicolinate + NADH + H(+). It catalyses the reaction (S)-2,3,4,5-tetrahydrodipicolinate + NADP(+) + H2O = (2S,4S)-4-hydroxy-2,3,4,5-tetrahydrodipicolinate + NADPH + H(+). It functions in the pathway amino-acid biosynthesis; L-lysine biosynthesis via DAP pathway; (S)-tetrahydrodipicolinate from L-aspartate: step 4/4. Its function is as follows. Catalyzes the conversion of 4-hydroxy-tetrahydrodipicolinate (HTPA) to tetrahydrodipicolinate. In Mycobacterium sp. (strain JLS), this protein is 4-hydroxy-tetrahydrodipicolinate reductase.